Consider the following 185-residue polypeptide: MDELEDGALSNGDNLSLPSAGTESWPTSATPGLPPSLLSTLDPTHLGLPEQLASVTVPIRLDTLSYLLHSALLGTYNLQQSLPPCSCTAQPSHIWPDTVRRPPRRSGQARGGWEVRRRPSRGWGRGRGRGRVWAQSQRGPERAEERERNMAGEPGAGPSTPPVTPPSQDGQKEAGGLSEDWEADY.

Disordered stretches follow at residues 1–38 (MDELEDGALSNGDNLSLPSAGTESWPTSATPGLPPSLL) and 93–185 (HIWP…EADY). Residues 11–25 (NGDNLSLPSAGTESW) show a composition bias toward polar residues. Residues 26–38 (PTSATPGLPPSLL) are compositionally biased toward low complexity. Residues 118–130 (RPSRGWGRGRGRG) show a composition bias toward basic residues. Residues 139–150 (GPERAEERERNM) are compositionally biased toward basic and acidic residues.

In terms of assembly, interacts with SPOCD1.

It localises to the nucleus. The protein localises to the nucleoplasm. Its function is as follows. Protein adapter involved in piRNA-directed transposon methylation by connecting PIWIL4-piRNA and DNA methylation machineries. The PIWIL4-piRNA pathway plays a central role during spermatogenesis by directing transposon DNA methylation and silencing, thereby preventing their mobilization, which is essential for the germline integrity. This is piRNA-mediated silencing protein C19orf84 homolog from Mus musculus (Mouse).